The chain runs to 1098 residues: Platelet-derived growth factor receptor beta (1098 aa).

The signal sequence occupies residues 1–31 (MGLPGVIPALVLRGQLLLSVLWLLGPQTSRG). The Extracellular portion of the chain corresponds to 32–531 (LVITPPGPEF…VVPHSLPFKV (500 aa)). 5 consecutive Ig-like C2-type domains span residues 33–119 (VITP…YIFV), 128–209 (PMDS…YSLQ), 213–308 (INVS…INIS), 330–402 (HRSR…HEDD), and 415–523 (PVRV…VTVV). 3 N-linked (GlcNAc...) asparagine glycosylation sites follow: Asn-44, Asn-88, and Asn-102. Residues Cys-53 and Cys-99 are joined by a disulfide bond. Cysteines 148 and 189 form a disulfide. A glycan (N-linked (GlcNAc...) asparagine) is linked at Asn-214. An intrachain disulfide couples Cys-234 to Cys-290. N-linked (GlcNAc...) asparagine glycans are attached at residues Asn-291, Asn-306, Asn-353, Asn-370, Asn-444, Asn-467, and Asn-478. A disulfide bond links Cys-435 and Cys-507. Residues 532–552 (VVISAILALVVLTVISLIILI) form a helical membrane-spanning segment. The Cytoplasmic portion of the chain corresponds to 553-1098 (MLWQKKPRYE…PLAEAEDSFL (546 aa)). A phosphotyrosine; by autocatalysis mark is found at Tyr-561, Tyr-578, and Tyr-580. Residues 599 to 961 (LVLGRTLGSG…QLVLLLERLL (363 aa)) enclose the Protein kinase domain. Residues 605–613 (LGSGAFGQV) and Lys-633 contribute to the ATP site. Tyr-685 carries the phosphotyrosine; by ABL1 and ABL2 modification. Residues Tyr-715, Tyr-739, Tyr-750, Tyr-762, Tyr-770, Tyr-774, and Tyr-777 each carry the phosphotyrosine; by autocatalysis modification. Catalysis depends on Asp-825, which acts as the Proton acceptor. Tyr-856 is modified (phosphotyrosine; by autocatalysis). A phosphotyrosine; by ABL1 and ABL2 mark is found at Tyr-933 and Tyr-969. 2 positions are modified to phosphotyrosine; by autocatalysis: Tyr-1008 and Tyr-1020. The segment at 1016–1098 (SDNDYIIPLP…PLAEAEDSFL (83 aa)) is disordered. Residues 1042 to 1059 (SLASSTLNEVNTSSTISC) are compositionally biased toward polar residues. Residues 1062–1082 (PLELQEEPQQAEPEAQLEQPQ) are compositionally biased toward low complexity.

It belongs to the protein kinase superfamily. Tyr protein kinase family. CSF-1/PDGF receptor subfamily. In terms of assembly, interacts with homodimeric PDGFB and PDGFD, and with heterodimers formed by PDGFA and PDGFB. May also interact with homodimeric PDGFC. Monomer in the absence of bound ligand. Interaction with homodimeric PDGFB, heterodimers formed by PDGFA and PDGFB or homodimeric PDGFD, leads to receptor dimerization, where both PDGFRA homodimers and heterodimers with PDGFRB are observed. Interacts with SH2B2/APS. Interacts directly (tyrosine phosphorylated) with SHB. Interacts (tyrosine phosphorylated) with PIK3R1 and RASA1. Interacts (tyrosine phosphorylated) with CBL. Interacts (tyrosine phosphorylated) with SRC and SRC family kinases. Interacts (tyrosine phosphorylated) with PIK3C2B, maybe indirectly. Interacts (tyrosine phosphorylated) with SHC1, GRB7, GRB10 and NCK1. Interaction with GRB2 is mediated by SHC1. Interacts (via C-terminus) with NHERF1. Autophosphorylated on tyrosine residues upon ligand binding. Autophosphorylation occurs in trans, i.e. one subunit of the dimeric receptor phosphorylates tyrosine residues on the other subunit. Phosphorylation at Tyr-578, and to a lesser degree, Tyr-580 is important for interaction with SRC. Phosphorylation at Tyr-715 is important for interaction with GRB2. Phosphorylation at Tyr-739 and Tyr-750 is important for interaction with PIK3R1. Phosphorylation at Tyr-750 is important for interaction with NCK1. Phosphorylation at Tyr-770 and Tyr-856 is important for interaction with RASA1/GAP. Phosphorylation at Tyr-856 is important for efficient phosphorylation of PLCG1 and PTPN11, resulting in increased phosphorylation of AKT1, MAPK1/ERK2 and/or MAPK3/ERK1, PDCD6IP/ALIX and STAM, and in increased cell proliferation. Phosphorylation at Tyr-1008 is important for interaction with PTPN11. Phosphorylation at Tyr-1008 and Tyr-1020 is important for interaction with PLCG1. Dephosphorylated by PTPRJ at Tyr-750, Tyr-856, Tyr-1008 and Tyr-1020. Dephosphorylated by PTPN2 at Tyr-578 and Tyr-1020. Post-translationally, N-glycosylated. In terms of processing, ubiquitinated. After autophosphorylation, the receptor is polyubiquitinated, leading to its degradation. In terms of tissue distribution, weakly expressed in glomerular mesangial cells and interstitial cells. Up-regulated in areas of renal fibrosis. In mice with unilateral ureteral obstruction, increased expression in interstitial cells at day 4 and expression is markedly elevated at day 7 and is maximal at day 14.

Its subcellular location is the cell membrane. The protein localises to the cytoplasmic vesicle. It is found in the lysosome lumen. The enzyme catalyses L-tyrosyl-[protein] + ATP = O-phospho-L-tyrosyl-[protein] + ADP + H(+). Its activity is regulated as follows. Present in an inactive conformation in the absence of bound ligand. Binding of PDGFB and/or PDGFD leads to dimerization and activation by autophosphorylation on tyrosine residues. Tyrosine-protein kinase that acts as a cell-surface receptor for homodimeric PDGFB and PDGFD and for heterodimers formed by PDGFA and PDGFB, and plays an essential role in the regulation of embryonic development, cell proliferation, survival, differentiation, chemotaxis and migration. Plays an essential role in blood vessel development by promoting proliferation, migration and recruitment of pericytes and smooth muscle cells to endothelial cells. Plays a role in the migration of vascular smooth muscle cells and the formation of neointima at vascular injury sites. Required for normal development of the cardiovascular system. Required for normal recruitment of pericytes (mesangial cells) in the kidney glomerulus, and for normal formation of a branched network of capillaries in kidney glomeruli. Promotes rearrangement of the actin cytoskeleton and the formation of membrane ruffles. Binding of its cognate ligands - homodimeric PDGFB, heterodimers formed by PDGFA and PDGFB or homodimeric PDGFD -leads to the activation of several signaling cascades; the response depends on the nature of the bound ligand and is modulated by the formation of heterodimers between PDGFRA and PDGFRB. Phosphorylates PLCG1, PIK3R1, PTPN11, RASA1/GAP, CBL, SHC1 and NCK1. Activation of PLCG1 leads to the production of the cellular signaling molecules diacylglycerol and inositol 1,4,5-trisphosphate, mobilization of cytosolic Ca(2+) and the activation of protein kinase C. Phosphorylation of PIK3R1, the regulatory subunit of phosphatidylinositol 3-kinase, leads to the activation of the AKT1 signaling pathway. Phosphorylation of SHC1, or of the C-terminus of PTPN11, creates a binding site for GRB2, resulting in the activation of HRAS, RAF1 and down-stream MAP kinases, including MAPK1/ERK2 and/or MAPK3/ERK1. Promotes phosphorylation and activation of SRC family kinases. Promotes phosphorylation of PDCD6IP/ALIX and STAM. Receptor signaling is down-regulated by protein phosphatases that dephosphorylate the receptor and its down-stream effectors, and by rapid internalization of the activated receptor. The chain is Platelet-derived growth factor receptor beta (Pdgfrb) from Mus musculus (Mouse).